We begin with the raw amino-acid sequence, 133 residues long: Peptide methionine sulfoxide reductase MsrB (133 aa).

Residues 8–130 (LDVWRELLSD…NSASLRLKPR (123 aa)) enclose the MsrB domain. Zn(2+) is bound by residues Cys-47, Cys-50, Cys-96, and Cys-99. Cys-119 acts as the Nucleophile in catalysis.

The protein belongs to the MsrB Met sulfoxide reductase family. Requires Zn(2+) as cofactor.

It carries out the reaction L-methionyl-[protein] + [thioredoxin]-disulfide + H2O = L-methionyl-(R)-S-oxide-[protein] + [thioredoxin]-dithiol. The sequence is that of Peptide methionine sulfoxide reductase MsrB from Azotobacter vinelandii (strain DJ / ATCC BAA-1303).